Consider the following 305-residue polypeptide: MEDGELIEYFKSQMKGDPKMASAVAAIQTLLEFLKRDKGETLQGLRANLTYAIKTLCGVDSSVAVSSGGELFLRFISLTSLEYSDYSKCKKIMIERGELFLRRISLSRNKIANLCHTFIKDGARILTHAYSRVVLRVLEEAVAAKKRFSVYITESQPDLSGKKMAKALSHLNVPVTVVLDAAVGYIMEKADLVIVGAEGVVENGGIINKIGTNQMAVCAKAQNKPFYVVAESFKFVRLFPLNQEDVPDKFKYKADTLKSVQTGQDLKEEHPWVDYTSPSLITLLFTDLGVLTPSAVSDELIKLYL.

Position 35 is an N6-acetyllysine (K35).

The protein belongs to the eIF-2B alpha/beta/delta subunits family. Component of the translation initiation factor 2B (eIF2B) complex which is a heterodecamer of two sets of five different subunits: alpha, beta, gamma, delta and epsilon. Subunits alpha, beta and delta comprise a regulatory subcomplex and subunits epsilon and gamma comprise a catalytic subcomplex. Within the complex, the hexameric regulatory complex resides at the center, with the two heterodimeric catalytic subcomplexes bound on opposite sides.

It localises to the cytoplasm. It is found in the cytosol. Its activity is regulated as follows. Activated by the chemical integrated stress response (ISR) inhibitor ISRIB which stimulates guanine nucleotide exchange factor activity for both phosphorylated and unphosphorylated eIF2. Acts as a component of the translation initiation factor 2B (eIF2B) complex, which catalyzes the exchange of GDP for GTP on eukaryotic initiation factor 2 (eIF2) gamma subunit. Its guanine nucleotide exchange factor activity is repressed when bound to eIF2 complex phosphorylated on the alpha subunit, thereby limiting the amount of methionyl-initiator methionine tRNA available to the ribosome and consequently global translation is repressed. The chain is Translation initiation factor eIF2B subunit alpha (Eif2b1) from Mus musculus (Mouse).